The following is a 356-amino-acid chain: D-alanine--D-alanine ligase (356 aa).

Residues 146-350 (KKLLVAEGLP…YAELLDTLIQ (205 aa)) form the ATP-grasp domain. 173-228 (KERLGLPVFVKPARGGSSIGVSKVSAWEDLEAALTLAYESDDKVLIEPEISGAEVE) contributes to the ATP binding site. Mg(2+) contacts are provided by D305, E317, and N319.

Belongs to the D-alanine--D-alanine ligase family. Requires Mg(2+) as cofactor. Mn(2+) is required as a cofactor.

Its subcellular location is the cytoplasm. The enzyme catalyses 2 D-alanine + ATP = D-alanyl-D-alanine + ADP + phosphate + H(+). The protein operates within cell wall biogenesis; peptidoglycan biosynthesis. Its function is as follows. Cell wall formation. The polypeptide is D-alanine--D-alanine ligase (Corynebacterium aurimucosum (strain ATCC 700975 / DSM 44827 / CIP 107346 / CN-1) (Corynebacterium nigricans)).